Consider the following 319-residue polypeptide: Thioredoxin reductase (319 aa).

36-43 (TGTNKGGQ) provides a ligand contact to FAD. A disulfide bridge connects residues Cys136 and Cys139. An FAD-binding site is contributed by 288-297 (DVIDHVYRQA).

Belongs to the class-II pyridine nucleotide-disulfide oxidoreductase family. As to quaternary structure, homodimer. The cofactor is FAD.

It is found in the cytoplasm. It catalyses the reaction [thioredoxin]-dithiol + NADP(+) = [thioredoxin]-disulfide + NADPH + H(+). This chain is Thioredoxin reductase (trxB), found in Buchnera aphidicola subsp. Acyrthosiphon pisum (strain APS) (Acyrthosiphon pisum symbiotic bacterium).